We begin with the raw amino-acid sequence, 451 residues long: Tubulin alpha-2 chain (451 aa).

Gln-11 lines the GTP pocket. Lys-40 carries the N6-acetyllysine modification. GTP is bound by residues Glu-71, Gly-144, Thr-145, Thr-179, Asn-206, and Asn-228. Position 71 (Glu-71) interacts with Mg(2+). Glu-254 is an active-site residue.

It belongs to the tubulin family. Dimer of alpha and beta chains. A typical microtubule is a hollow water-filled tube with an outer diameter of 25 nm and an inner diameter of 15 nM. Alpha-beta heterodimers associate head-to-tail to form protofilaments running lengthwise along the microtubule wall with the beta-tubulin subunit facing the microtubule plus end conferring a structural polarity. Microtubules usually have 13 protofilaments but different protofilament numbers can be found in some organisms and specialized cells. Requires Mg(2+) as cofactor. Post-translationally, undergoes a tyrosination/detyrosination cycle, the cyclic removal and re-addition of a C-terminal tyrosine residue by the enzymes tubulin tyrosine carboxypeptidase (TTCP) and tubulin tyrosine ligase (TTL), respectively. Acetylation of alpha chains at Lys-40 stabilizes microtubules and affects affinity and processivity of microtubule motors. This modification has a role in multiple cellular functions, ranging from cell motility, cell cycle progression or cell differentiation to intracellular trafficking and signaling.

It is found in the cytoplasm. The protein resides in the cytoskeleton. It catalyses the reaction GTP + H2O = GDP + phosphate + H(+). Its function is as follows. Tubulin is the major constituent of microtubules, a cylinder consisting of laterally associated linear protofilaments composed of alpha- and beta-tubulin heterodimers. Microtubules grow by the addition of GTP-tubulin dimers to the microtubule end, where a stabilizing cap forms. Below the cap, tubulin dimers are in GDP-bound state, owing to GTPase activity of alpha-tubulin. The protein is Tubulin alpha-2 chain (TUBA2) of Zea mays (Maize).